The following is a 427-amino-acid chain: 3-phosphoshikimate 1-carboxyvinyltransferase (427 aa).

Lys-22, Ser-23, and Arg-27 together coordinate 3-phosphoshikimate. Lys-22 contributes to the phosphoenolpyruvate binding site. Residues Gly-97 and Arg-125 each contribute to the phosphoenolpyruvate site. 7 residues coordinate 3-phosphoshikimate: Ser-171, Ser-172, Gln-173, Ser-199, Asp-315, Asn-338, and Lys-342. Gln-173 is a phosphoenolpyruvate binding site. The active-site Proton acceptor is Asp-315. Phosphoenolpyruvate contacts are provided by Arg-346, Arg-388, and Lys-413.

The protein belongs to the EPSP synthase family. As to quaternary structure, monomer.

Its subcellular location is the cytoplasm. It catalyses the reaction 3-phosphoshikimate + phosphoenolpyruvate = 5-O-(1-carboxyvinyl)-3-phosphoshikimate + phosphate. It participates in metabolic intermediate biosynthesis; chorismate biosynthesis; chorismate from D-erythrose 4-phosphate and phosphoenolpyruvate: step 6/7. Catalyzes the transfer of the enolpyruvyl moiety of phosphoenolpyruvate (PEP) to the 5-hydroxyl of shikimate-3-phosphate (S3P) to produce enolpyruvyl shikimate-3-phosphate and inorganic phosphate. This is 3-phosphoshikimate 1-carboxyvinyltransferase from Aliivibrio salmonicida (strain LFI1238) (Vibrio salmonicida (strain LFI1238)).